The primary structure comprises 192 residues: MSIENTLPTYQSLALALNQQAVALTPAEMHGLISGMLCGGSKDDGWRALVHDLTNEGIAFSQALGLPLQQLHEATQEALENEGFMFQLLIPEGEEVTVFDRADALSGWVNHFLLGLGMLQPKLAQVKDEVGEAIDDLRNIAQLGYDEDEDQEELAQSLEEVIEYVRVAAILCHIEFTQEKPTAPEIRKPTLH.

This sequence belongs to the UPF0149 family.

This Yersinia enterocolitica serotype O:8 / biotype 1B (strain NCTC 13174 / 8081) protein is UPF0149 protein YE3397.